We begin with the raw amino-acid sequence, 330 residues long: Phenylalanine--tRNA ligase alpha subunit (330 aa).

Mg(2+) is bound at residue Glu254.

The protein belongs to the class-II aminoacyl-tRNA synthetase family. Phe-tRNA synthetase alpha subunit type 1 subfamily. Tetramer of two alpha and two beta subunits. It depends on Mg(2+) as a cofactor.

It is found in the cytoplasm. The catalysed reaction is tRNA(Phe) + L-phenylalanine + ATP = L-phenylalanyl-tRNA(Phe) + AMP + diphosphate + H(+). The sequence is that of Phenylalanine--tRNA ligase alpha subunit (pheS) from Neisseria meningitidis serogroup A / serotype 4A (strain DSM 15465 / Z2491).